The sequence spans 95 residues: Aspartyl/glutamyl-tRNA(Asn/Gln) amidotransferase subunit C (95 aa).

The protein belongs to the GatC family. As to quaternary structure, heterotrimer of A, B and C subunits.

The enzyme catalyses L-glutamyl-tRNA(Gln) + L-glutamine + ATP + H2O = L-glutaminyl-tRNA(Gln) + L-glutamate + ADP + phosphate + H(+). It catalyses the reaction L-aspartyl-tRNA(Asn) + L-glutamine + ATP + H2O = L-asparaginyl-tRNA(Asn) + L-glutamate + ADP + phosphate + 2 H(+). Allows the formation of correctly charged Asn-tRNA(Asn) or Gln-tRNA(Gln) through the transamidation of misacylated Asp-tRNA(Asn) or Glu-tRNA(Gln) in organisms which lack either or both of asparaginyl-tRNA or glutaminyl-tRNA synthetases. The reaction takes place in the presence of glutamine and ATP through an activated phospho-Asp-tRNA(Asn) or phospho-Glu-tRNA(Gln). In Rhodopseudomonas palustris (strain ATCC BAA-98 / CGA009), this protein is Aspartyl/glutamyl-tRNA(Asn/Gln) amidotransferase subunit C.